A 337-amino-acid chain; its full sequence is Anthranilate phosphoribosyltransferase (337 aa).

5-phospho-alpha-D-ribose 1-diphosphate-binding positions include Gly-80, 83-84, Thr-88, 90-93, 108-116, and Ser-120; these read GD, NIST, and KHGNRSVSS. Gly-80 is a binding site for anthranilate. Ser-92 is a Mg(2+) binding site. Asn-111 is an anthranilate binding site. Arg-166 contacts anthranilate. Mg(2+) is bound by residues Asp-225 and Glu-226.

Belongs to the anthranilate phosphoribosyltransferase family. Homodimer. Requires Mg(2+) as cofactor.

The enzyme catalyses N-(5-phospho-beta-D-ribosyl)anthranilate + diphosphate = 5-phospho-alpha-D-ribose 1-diphosphate + anthranilate. It functions in the pathway amino-acid biosynthesis; L-tryptophan biosynthesis; L-tryptophan from chorismate: step 2/5. In terms of biological role, catalyzes the transfer of the phosphoribosyl group of 5-phosphorylribose-1-pyrophosphate (PRPP) to anthranilate to yield N-(5'-phosphoribosyl)-anthranilate (PRA). In Syntrophobacter fumaroxidans (strain DSM 10017 / MPOB), this protein is Anthranilate phosphoribosyltransferase.